Reading from the N-terminus, the 212-residue chain is Probable U3 small nucleolar RNA-associated protein 11 (212 aa).

This sequence belongs to the UTP11 family. Component of the ribosomal small subunit (SSU) processome.

The protein resides in the nucleus. It localises to the nucleolus. Functionally, involved in nucleolar processing of pre-18S ribosomal RNA. The protein is Probable U3 small nucleolar RNA-associated protein 11 of Plasmodium falciparum (isolate 3D7).